Reading from the N-terminus, the 201-residue chain is Small ribosomal subunit protein uS4c (201 aa).

Positions 91 to 151 constitute an S4 RNA-binding domain; the sequence is MRLDNIIFQL…TKNPEELRTI (61 aa).

This sequence belongs to the universal ribosomal protein uS4 family. Part of the 30S ribosomal subunit. Contacts protein S5. The interaction surface between S4 and S5 is involved in control of translational fidelity.

It localises to the plastid. The protein localises to the chloroplast. In terms of biological role, one of the primary rRNA binding proteins, it binds directly to 16S rRNA where it nucleates assembly of the body of the 30S subunit. With S5 and S12 plays an important role in translational accuracy. This chain is Small ribosomal subunit protein uS4c (rps4), found in Welwitschia mirabilis (Tree tumbo).